The primary structure comprises 75 residues: U6-lycotoxin-Ls1f (75 aa).

Residues 1-21 (MKLLLFTALVLVVISLVEVEA) form the signal peptide. Positions 22-25 (ENER) are excised as a propeptide.

This sequence belongs to the neurotoxin 19 (CSTX) family. 06 (U6-Lctx) subfamily. Post-translationally, contains 4 disulfide bonds. As to expression, expressed by the venom gland.

The protein localises to the secreted. The protein is U6-lycotoxin-Ls1f of Lycosa singoriensis (Wolf spider).